The chain runs to 245 residues: Small ribosomal subunit protein uS2 (245 aa).

The protein belongs to the universal ribosomal protein uS2 family.

In Pseudomonas fluorescens (strain SBW25), this protein is Small ribosomal subunit protein uS2.